Here is a 306-residue protein sequence, read N- to C-terminus: uncharacterized protein (306 aa).

Asp-204 functions as the Proton acceptor in the catalytic mechanism.

Belongs to the aminoglycoside phosphotransferase family.

This is an uncharacterized protein from Bacillus subtilis (strain 168).